The following is a 129-amino-acid chain: Small ribosomal subunit protein uS11 (129 aa).

This sequence belongs to the universal ribosomal protein uS11 family. As to quaternary structure, part of the 30S ribosomal subunit. Interacts with proteins S7 and S18. Binds to IF-3.

Its function is as follows. Located on the platform of the 30S subunit, it bridges several disparate RNA helices of the 16S rRNA. Forms part of the Shine-Dalgarno cleft in the 70S ribosome. The chain is Small ribosomal subunit protein uS11 from Thermosipho africanus (strain TCF52B).